The sequence spans 75 residues: Phytosulfokines 3 (75 aa).

Residues 1 to 22 form the signal peptide; it reads MSPKVIAICLVALLLPISISHG. The propeptide occupies 23-66; it reads GRIGPIEPSKASSKVVERGNYDGRVEGCEEDDCLVERLLVAHLD. Tyr67 and Tyr69 each carry sulfotyrosine. Residues 72–75 constitute a propeptide that is removed on maturation; that stretch reads GKHN.

Belongs to the phytosulfokine family. Sulfation is important for activity and for the binding to a putative membrane receptor. Post-translationally, PSK-alpha is produced by endopeptidase digestion. PSK-beta is produced from PSK-alpha by exopeptidase digestion.

Its subcellular location is the secreted. Functionally, promotes plant cell differentiation, organogenesis and somatic embryogenesis as well as cell proliferation. This Oryza sativa subsp. japonica (Rice) protein is Phytosulfokines 3 (PSK3).